The sequence spans 726 residues: Probable alpha-galactosidase G (726 aa).

N-linked (GlcNAc...) asparagine glycosylation is found at asparagine 23, asparagine 166, and asparagine 456. Aspartate 485 (nucleophile) is an active-site residue. Aspartate 547 functions as the Proton donor in the catalytic mechanism. N-linked (GlcNAc...) asparagine glycans are attached at residues asparagine 657 and asparagine 673.

It belongs to the glycosyl hydrolase 36 family. Homotetramer. It depends on Mg(2+) as a cofactor. Requires NAD(+) as cofactor.

It is found in the secreted. The catalysed reaction is Hydrolysis of terminal, non-reducing alpha-D-galactose residues in alpha-D-galactosides, including galactose oligosaccharides, galactomannans and galactolipids.. In terms of biological role, hydrolyzes a variety of simple alpha-D-galactoside as well as more complex molecules such as oligosaccharides and polysaccharides. Not active on paranitrophenyl-alpha-galactoside and raffinose. The sequence is that of Probable alpha-galactosidase G (aglG) from Emericella nidulans (strain FGSC A4 / ATCC 38163 / CBS 112.46 / NRRL 194 / M139) (Aspergillus nidulans).